A 399-amino-acid chain; its full sequence is RNA polymerase sigma factor SigA1 (399 aa).

The disordered stretch occupies residues 1-73 (MTQLISIDKE…DEDSVGEDED (73 aa)). Positions 60–73 (DAIDDEDSVGEDED) are enriched in acidic residues. Residues 167-237 (MVQSNLRLVV…TRAIADQSRT (71 aa)) are sigma-70 factor domain-2. Positions 191–194 (DLIQ) match the Interaction with polymerase core subunit RpoC motif. The sigma-70 factor domain-3 stretch occupies residues 246 to 321 (ETISRIKKTT…EADGETPEDE (76 aa)). Residues 334–387 (VLSTLSPRERDVLRLRYGLDDGRMKTLEEIGQLFNVTRERIRQIEAKALRKLRH) are sigma-70 factor domain-4. The H-T-H motif DNA-binding region spans 360 to 379 (LEEIGQLFNVTRERIRQIEA).

The protein belongs to the sigma-70 factor family. RpoD/SigA subfamily. As to quaternary structure, interacts transiently with the RNA polymerase catalytic core.

The protein localises to the cytoplasm. In terms of biological role, sigma factors are initiation factors that promote the attachment of RNA polymerase to specific initiation sites and are then released. This sigma factor is the primary sigma factor during exponential growth. In Synechococcus elongatus (strain ATCC 33912 / PCC 7942 / FACHB-805) (Anacystis nidulans R2), this protein is RNA polymerase sigma factor SigA1.